A 724-amino-acid chain; its full sequence is DNA ligase (724 aa).

NAD(+) is bound by residues 44 to 48, 93 to 94, and Glu127; these read DADYD and SL. The active-site N6-AMP-lysine intermediate is Lys129. Arg150, Glu186, Lys307, and Lys331 together coordinate NAD(+). Zn(2+) is bound by residues Cys437, Cys440, Cys461, and Cys467. The region spanning 646-724 is the BRCT domain; the sequence is TEGSPVAGKT…EDEWLALIGG (79 aa).

It belongs to the NAD-dependent DNA ligase family. LigA subfamily. Requires Mg(2+) as cofactor. It depends on Mn(2+) as a cofactor.

It carries out the reaction NAD(+) + (deoxyribonucleotide)n-3'-hydroxyl + 5'-phospho-(deoxyribonucleotide)m = (deoxyribonucleotide)n+m + AMP + beta-nicotinamide D-nucleotide.. In terms of biological role, DNA ligase that catalyzes the formation of phosphodiester linkages between 5'-phosphoryl and 3'-hydroxyl groups in double-stranded DNA using NAD as a coenzyme and as the energy source for the reaction. It is essential for DNA replication and repair of damaged DNA. The protein is DNA ligase of Agrobacterium fabrum (strain C58 / ATCC 33970) (Agrobacterium tumefaciens (strain C58)).